We begin with the raw amino-acid sequence, 529 residues long: GMP synthase [glutamine-hydrolyzing] (529 aa).

Residues 3–204 form the Glutamine amidotransferase type-1 domain; the sequence is TVAIVDFGSQ…FLKIAGCTRD (202 aa). C87 (nucleophile) is an active-site residue. Active-site residues include H179 and E181. The GMPS ATP-PPase domain maps to 205–395; sequence WTMGSFLHTQ…LGLPSAILDR (191 aa). 232–238 is an ATP binding site; it reads SGGVDSS.

As to quaternary structure, homodimer.

It carries out the reaction XMP + L-glutamine + ATP + H2O = GMP + L-glutamate + AMP + diphosphate + 2 H(+). It functions in the pathway purine metabolism; GMP biosynthesis; GMP from XMP (L-Gln route): step 1/1. Its function is as follows. Catalyzes the synthesis of GMP from XMP. The protein is GMP synthase [glutamine-hydrolyzing] of Anaplasma marginale (strain St. Maries).